A 204-amino-acid chain; its full sequence is Protein GrpE (204 aa).

A compositionally biased stretch (basic and acidic residues) spans 1–12 (MSNQEKKMHEEE). The tract at residues 1–37 (MSNQEKKMHEEELQQQETVEADTEAEAEAVGTDADIE) is disordered.

The protein belongs to the GrpE family. Homodimer.

Its subcellular location is the cytoplasm. Participates actively in the response to hyperosmotic and heat shock by preventing the aggregation of stress-denatured proteins, in association with DnaK and GrpE. It is the nucleotide exchange factor for DnaK and may function as a thermosensor. Unfolded proteins bind initially to DnaJ; upon interaction with the DnaJ-bound protein, DnaK hydrolyzes its bound ATP, resulting in the formation of a stable complex. GrpE releases ADP from DnaK; ATP binding to DnaK triggers the release of the substrate protein, thus completing the reaction cycle. Several rounds of ATP-dependent interactions between DnaJ, DnaK and GrpE are required for fully efficient folding. The chain is Protein GrpE from Vibrio proteolyticus (Aeromonas proteolytica).